The following is a 670-amino-acid chain: Extracellular matrix protein 2 (670 aa).

The first 19 residues, 1-19, serve as a signal peptide directing secretion; sequence MKLAVLFCFILLIVLQTDC. A VWFC domain is found at 96-153; sequence GYCFVKGMIMYNKAVWSPEPCTTCLCSNGRVLCDETECHPKACPYTIKPEGECCPICS. The segment at 185 to 270 is disordered; the sequence is SEEDEEIAEG…EEDAIRGDVF (86 aa). Residues 192–227 show a composition bias toward basic and acidic residues; it reads AEGHKEHKKETSVPTKIHGDGERTERKLRPEKEGRS. Over residues 241–263 the composition is skewed to acidic residues; it reads ESKEETEREGEEEEEEEEEEEED. The Cell attachment site signature appears at 266–268; it reads RGD. One can recognise an LRRNT domain in the interval 278–315; it reads PGTPRGRPRLPRSCSLSYRTISCVHADFTEIPPITAPE. LRR repeat units lie at residues 339 to 359, 365 to 386, 387 to 407, 410 to 430, 436 to 456, 457 to 478, 481 to 501, 507 to 528, 529 to 549, 553 to 573, 580 to 601, 603 to 624, and 632 to 655; these read NLER…GPKA, KLMR…LPST, LEEL…SLSD, QLVT…DPLA, SLSY…GLPA, STEE…CFNH, KITM…APLA, NLES…LPKS, LLHL…VFGH, GLEY…DLVS, SLRE…IQDM, ALHF…QICN, and ALEH…AFSC. Asparagine 349 carries N-linked (GlcNAc...) asparagine glycosylation. An N-linked (GlcNAc...) asparagine glycan is attached at asparagine 420. A glycan (N-linked (GlcNAc...) asparagine) is linked at asparagine 477.

This sequence belongs to the small leucine-rich proteoglycan (SLRP) family. SLRP class I subfamily. In terms of assembly, interacts with numerous extracellular matrix proteins. Interacts with isoform 1 of MSL1. Interacts with isoform 3 of RASSF1.

It is found in the secreted. The protein resides in the extracellular space. It localises to the extracellular matrix. Its function is as follows. Promotes matrix assembly and cell adhesiveness. The polypeptide is Extracellular matrix protein 2 (Ecm2) (Mus musculus (Mouse)).